The chain runs to 228 residues: Chaperone protein FanE (228 aa).

Residues 1-19 (MNKFISIIALCVFSSYANA) form the signal peptide. Cysteines 157 and 198 form a disulfide.

Belongs to the periplasmic pilus chaperone family.

It is found in the periplasm. In terms of biological role, mediates assembly of pili by forming soluble multimeric complexes with pili subunits as an intermediate step in the assembly process. This protein is involved in K99 pili assembly. In Escherichia coli, this protein is Chaperone protein FanE (fanE).